The following is a 414-amino-acid chain: Serine hydroxymethyltransferase (414 aa).

Residues Leu-116 and 120-122 (GHL) contribute to the (6S)-5,6,7,8-tetrahydrofolate site. Lys-225 is subject to N6-(pyridoxal phosphate)lysine. 349 to 351 (SPF) lines the (6S)-5,6,7,8-tetrahydrofolate pocket.

This sequence belongs to the SHMT family. Homodimer. Pyridoxal 5'-phosphate is required as a cofactor.

The protein localises to the cytoplasm. It catalyses the reaction (6R)-5,10-methylene-5,6,7,8-tetrahydrofolate + glycine + H2O = (6S)-5,6,7,8-tetrahydrofolate + L-serine. The protein operates within one-carbon metabolism; tetrahydrofolate interconversion. It participates in amino-acid biosynthesis; glycine biosynthesis; glycine from L-serine: step 1/1. Its function is as follows. Catalyzes the reversible interconversion of serine and glycine with tetrahydrofolate (THF) serving as the one-carbon carrier. This reaction serves as the major source of one-carbon groups required for the biosynthesis of purines, thymidylate, methionine, and other important biomolecules. Also exhibits THF-independent aldolase activity toward beta-hydroxyamino acids, producing glycine and aldehydes, via a retro-aldol mechanism. This is Serine hydroxymethyltransferase from Oenococcus oeni (strain ATCC BAA-331 / PSU-1).